Reading from the N-terminus, the 270-residue chain is tRNA pseudouridine synthase A (270 aa).

D52 (nucleophile) is an active-site residue. Substrate is bound at residue Y110.

This sequence belongs to the tRNA pseudouridine synthase TruA family. As to quaternary structure, homodimer.

It carries out the reaction uridine(38/39/40) in tRNA = pseudouridine(38/39/40) in tRNA. Its function is as follows. Formation of pseudouridine at positions 38, 39 and 40 in the anticodon stem and loop of transfer RNAs. This Paraburkholderia phytofirmans (strain DSM 17436 / LMG 22146 / PsJN) (Burkholderia phytofirmans) protein is tRNA pseudouridine synthase A.